The sequence spans 433 residues: Ascus wall endo-1,3-alpha-glucanase (433 aa).

The protein belongs to the glycosyl hydrolase 71 family.

It localises to the ascus epiplasm. It carries out the reaction Endohydrolysis of (1-&gt;3)-alpha-D-glucosidic linkages in isolichenin, pseudonigeran and nigeran.. In terms of biological role, promotes the release of ascospores from asci by hydrolyzing 1,3-alpha-glucan in the ascus wall. The polypeptide is Ascus wall endo-1,3-alpha-glucanase (Schizosaccharomyces pombe (strain 972 / ATCC 24843) (Fission yeast)).